The primary structure comprises 539 residues: Carotene epsilon-monooxygenase, chloroplastic (539 aa).

The N-terminal 36 residues, 1-36, are a transit peptide targeting the chloroplast; that stretch reads MESSLFSPSSSSYSSLFTAKPTRLLSPKPKFTFSIR. C487 lines the heme pocket.

This sequence belongs to the cytochrome P450 family. Requires heme as cofactor.

It localises to the plastid. The protein localises to the chloroplast. It catalyses the reaction alpha-carotene + reduced [NADPH--hemoprotein reductase] + O2 = alpha-cryptoxanthin + oxidized [NADPH--hemoprotein reductase] + H2O + H(+). The enzyme catalyses zeinoxanthin + reduced [NADPH--hemoprotein reductase] + O2 = lutein + oxidized [NADPH--hemoprotein reductase] + H2O + H(+). In terms of biological role, heme-containing cytochrome P450 involved in the biosynthesis of xanthophylls. Specific for epsilon- and beta-ring hydroxylation of alpha-carotene. Has only a low activity toward the beta-rings of beta-carotene. The preferred substrate in planta is not alpha-carotene but the epsilon-ring of zeinoxanthin. Possesses a major beta-carotene hydroxylase activity in planta when depleted in its preferred substrate alpha-carotene. The polypeptide is Carotene epsilon-monooxygenase, chloroplastic (CYP97C1) (Arabidopsis thaliana (Mouse-ear cress)).